Reading from the N-terminus, the 785-residue chain is Gamma-interferon-inducible protein 16 (785 aa).

The Pyrin domain occupies 5–92; the sequence is YKNIVLLKGL…KKEKLKAKGL (88 aa). At lysine 45 the chain carries N6-acetyllysine. Positions 88–99 are enriched in basic residues; the sequence is KAKGLAPSRKRK. The tract at residues 88-196 is disordered; sequence KAKGLAPSRK…TVAKCQATPR (109 aa). The residue at position 95 (serine 95) is a Phosphoserine. A Nuclear localization signal motif is present at residues 96–100; sequence RKRKK. Lysine 99 carries the post-translational modification N6-acetyllysine. The span at 104 to 114 shows a compositional bias: low complexity; the sequence is AASPAPSTSST. Residue serine 106 is modified to Phosphoserine. Lysine 116 participates in a covalent cross-link: Glycyl lysine isopeptide (Lys-Gly) (interchain with G-Cter in SUMO2). An N6-acetyllysine; alternate modification is found at lysine 128. Lysine 128 participates in a covalent cross-link: Glycyl lysine isopeptide (Lys-Gly) (interchain with G-Cter in SUMO2); alternate. 3 consecutive short sequence motifs (nuclear localization signal) follow at residues 128 to 131, 134 to 136, and 140 to 143; these read KRKK, KEK, and KGSK. Positions 166–182 are enriched in low complexity; the sequence is SPSPKTSSSAPPNTSST. Phosphoserine occurs at positions 168 and 174. Residues 192 to 393 are interaction with TP53 C-terminus; the sequence is QATPRRSVLQ…SFIQIKKKTN (202 aa). Positions 193-393 constitute an HIN-200 1 domain; sequence ATPRRSVLQK…SFIQIKKKTN (201 aa). Position 214 is an N6-acetyllysine (lysine 214). The disordered stretch occupies residues 388–442; that stretch reads IKKKTNPRNNDPKSMKLPQEQSQLPNPSEAGTTFPESHLWTPQMPPTTPSSSFFT. Residues 406-422 show a composition bias toward polar residues; the sequence is QEQSQLPNPSEAGTTFP. 2 positions are modified to N6-acetyllysine: lysine 444 and lysine 451. The 200-residue stretch at 566–765 folds into the HIN-200 2 domain; the sequence is EVSIEDSAQS…SHIKVIKTRK (200 aa). The interaction with TP53 core domain stretch occupies residues 571–766; it reads DSAQSDLKEV…HIKVIKTRKN (196 aa). Serine 575 carries the phosphoserine modification. Lysine 598 and lysine 614 each carry N6-acetyllysine. Residue lysine 683 forms a Glycyl lysine isopeptide (Lys-Gly) (interchain with G-Cter in SUMO2) linkage. At serine 780 the chain carries Phosphoserine.

The protein belongs to the HIN-200 family. As to quaternary structure, forms homooligomers. Interacts with TMEM173, AIM2, PYCARD and CASP1. Interacts with BRCA1, TP53, E2F1, RB1 and SP1. Interacts with MTA1. Interacts with MTA1. Interacts with PYDC5. Lysine acetylation in the multipartite nuclear localization signal (NLS) regulates the subcellular location. In terms of processing, phosphorylated on Ser and Thr.

Its subcellular location is the nucleus. It is found in the cytoplasm. Binds double-stranded DNA. Binds preferentially to supercoiled DNA and cruciform DNA structures. Seems to be involved in transcriptional regulation. May function as a transcriptional repressor. Could have a role in the regulation of hematopoietic differentiation through activation of unknown target genes. Controls cellular proliferation by modulating the functions of cell cycle regulatory factors including p53/TP53 and the retinoblastoma protein. May be involved in TP53-mediated transcriptional activation by enhancing TP53 sequence-specific DNA binding and modulating TP53 phosphorylation status. Seems to be involved in energy-level-dependent activation of the ATM/ AMPK/TP53 pathway coupled to regulation of autophagy. May be involved in regulation of TP53-mediated cell death also involving BRCA1. May be involved in the senescence of prostate epithelial cells. Involved in innate immune response by recognizing viral dsDNA in the cytosol and probably in the nucleus. After binding to viral DNA in the cytoplasm recruits TMEM173/STING and mediates the induction of IFN-beta. Has anti-inflammatory activity and inhibits the activation of the AIM2 inflammasome, probably via association with AIM2. Proposed to bind viral DNA in the nucleus and to induce the formation of nuclear caspase-1-activating inflammasome formation via association with PYCARD. Inhibits replication of herpesviruses probably by interfering with promoter recruitment of members of the Sp1 family of transcription factors. This Pongo abelii (Sumatran orangutan) protein is Gamma-interferon-inducible protein 16 (IFI16).